Consider the following 1083-residue polypeptide: Alpha-mannosidase (1083 aa).

At Ser-2 the chain carries N-acetylserine. Zn(2+) is bound by residues His-298, Asp-300, Asp-411, and His-626. Asp-411 functions as the Nucleophile in the catalytic mechanism.

The protein belongs to the glycosyl hydrolase 38 family. As to quaternary structure, composed of isoforms with three constituent polypeptides described as [(107 kDa)-n (73 kDa)-(6-n) (31 kDa)-(6-n)], where n is 0-6. The 73 kDa and the 31 kDa polypeptides may be proteolytic derivatives of the 107 kDa polypeptide in the vacuole. Oligomerizes in the cytoplasm and retains its oligomeric form during import into the vacuole. It depends on Zn(2+) as a cofactor. The N-terminus is blocked.

The protein resides in the vacuole. The catalysed reaction is Hydrolysis of terminal, non-reducing alpha-D-mannose residues in alpha-D-mannosides.. In terms of biological role, degrades free oligosaccharides in the vacuole. This chain is Alpha-mannosidase (AMS1), found in Saccharomyces cerevisiae (strain ATCC 204508 / S288c) (Baker's yeast).